Reading from the N-terminus, the 478-residue chain is tRNA (adenine(58)-N(1))-methyltransferase non-catalytic subunit TRM6 (478 aa).

The tract at residues 456–478 is disordered; sequence SENATAADSSEKLAEHGAKKQKI. Residues 464–478 are compositionally biased toward basic and acidic residues; sequence SSEKLAEHGAKKQKI.

The protein belongs to the TRM6/GCD10 family. Heterotetramer; composed of two copies of TRM6/GCD10 and two copies of TRM61/GCD14.

Its subcellular location is the nucleus. Its function is as follows. Substrate-binding subunit of tRNA (adenine-N(1)-)-methyltransferase, which catalyzes the formation of N(1)-methyladenine at position 58 (m1A58) in initiator methionyl-tRNA. Also required for repression of GCN4 mRNA translation by the upstream open reading frames (uORFs) under conditions of amino acid sufficiency. In Saccharomyces cerevisiae (strain ATCC 204508 / S288c) (Baker's yeast), this protein is tRNA (adenine(58)-N(1))-methyltransferase non-catalytic subunit TRM6 (GCD10).